We begin with the raw amino-acid sequence, 350 residues long: Deoxyhypusine synthase-like protein (350 aa).

This sequence belongs to the deoxyhypusine synthase family.

The polypeptide is Deoxyhypusine synthase-like protein (Chlorobaculum parvum (strain DSM 263 / NCIMB 8327) (Chlorobium vibrioforme subsp. thiosulfatophilum)).